Consider the following 321-residue polypeptide: MKGRNWNQASVAKLFELPFFELLYKAYETHRSHFDVRDMELCTLSSIKTGTCPEDCAYCPQSGHYKTDVEREKLINLEAVLEQAKVAKENGARRFCMGAAWRSPPKRELPKVLEMIKSVKALGLETCVTLGMLDQEQALQLKEAGLDFYNHNLDTSPEFYKKIITTRTYQDRMETLKNVRNAGINVCCGGILGMGESRADRIQLLLELYQLPEPPTSIPINQLIPIKGTPLENTKAIDPFEFIKTIAITRLLFPTSVIRLSAGREAMSDELQAWCFMAGANSIFYGDKLLTAKNPGQNRDVNLLKKLGLKVPVLTEEYACY.

The Radical SAM core domain occupies 37–264 (RDMELCTLSS…TSVIRLSAGR (228 aa)). [4Fe-4S] cluster contacts are provided by Cys52, Cys56, and Cys59. 4 residues coordinate [2Fe-2S] cluster: Cys96, Cys127, Cys187, and Arg259.

The protein belongs to the radical SAM superfamily. Biotin synthase family. As to quaternary structure, homodimer. [4Fe-4S] cluster serves as cofactor. The cofactor is [2Fe-2S] cluster.

The catalysed reaction is (4R,5S)-dethiobiotin + (sulfur carrier)-SH + 2 reduced [2Fe-2S]-[ferredoxin] + 2 S-adenosyl-L-methionine = (sulfur carrier)-H + biotin + 2 5'-deoxyadenosine + 2 L-methionine + 2 oxidized [2Fe-2S]-[ferredoxin]. It functions in the pathway cofactor biosynthesis; biotin biosynthesis; biotin from 7,8-diaminononanoate: step 2/2. In terms of biological role, catalyzes the conversion of dethiobiotin (DTB) to biotin by the insertion of a sulfur atom into dethiobiotin via a radical-based mechanism. The chain is Biotin synthase from Coxiella burnetii (strain CbuK_Q154) (Coxiella burnetii (strain Q154)).